Consider the following 394-residue polypeptide: Nicotinate phosphoribosyltransferase (394 aa).

Position 218 is a phosphohistidine; by autocatalysis (His-218).

Belongs to the NAPRTase family. In terms of processing, transiently phosphorylated on a His residue during the reaction cycle. Phosphorylation strongly increases the affinity for substrates and increases the rate of nicotinate D-ribonucleotide production. Dephosphorylation regenerates the low-affinity form of the enzyme, leading to product release.

It carries out the reaction nicotinate + 5-phospho-alpha-D-ribose 1-diphosphate + ATP + H2O = nicotinate beta-D-ribonucleotide + ADP + phosphate + diphosphate. It functions in the pathway cofactor biosynthesis; NAD(+) biosynthesis; nicotinate D-ribonucleotide from nicotinate: step 1/1. Its function is as follows. Catalyzes the synthesis of beta-nicotinate D-ribonucleotide from nicotinate and 5-phospho-D-ribose 1-phosphate at the expense of ATP. This chain is Nicotinate phosphoribosyltransferase, found in Xylella fastidiosa (strain 9a5c).